We begin with the raw amino-acid sequence, 500 residues long: Trehalose-6-phosphate synthase (500 aa).

Residue R28 coordinates D-glucose 6-phosphate. A UDP-alpha-D-glucose-binding site is contributed by 48 to 49; sequence GG. D-glucose 6-phosphate contacts are provided by Y104 and D158. Residues R300 and K305 each coordinate UDP-alpha-D-glucose. R338 lines the D-glucose 6-phosphate pocket. A UDP-alpha-D-glucose-binding site is contributed by 403-407; it reads LVAKE.

It belongs to the glycosyltransferase 20 family. In terms of assembly, homotetramer.

It carries out the reaction ADP-alpha-D-glucose + D-glucose 6-phosphate = alpha,alpha-trehalose 6-phosphate + ADP + H(+). The enzyme catalyses CDP-alpha-D-glucose + D-glucose 6-phosphate = alpha,alpha-trehalose 6-phosphate + CDP + H(+). The catalysed reaction is GDP-alpha-D-glucose + D-glucose 6-phosphate = alpha,alpha-trehalose 6-phosphate + GDP + H(+). It catalyses the reaction TDP-alpha-D-glucose + D-glucose 6-phosphate = 5-methyl-UDP + alpha,alpha-trehalose 6-phosphate + H(+). It carries out the reaction D-glucose 6-phosphate + UDP-alpha-D-glucose = alpha,alpha-trehalose 6-phosphate + UDP + H(+). It participates in glycan biosynthesis; trehalose biosynthesis. Probably involved in the osmoprotection via the biosynthesis of trehalose and in the production of glycogen and alpha-glucan via the TreS-Pep2 branch involved in the biosynthesis of maltose-1-phosphate (M1P). Catalyzes the transfer of glucose from UDP-glucose (UDP-Glc) to D-glucose 6-phosphate (Glc-6-P) to form trehalose-6-phosphate. Probably also able to use ADP-Glc, CDP-Glc, GDP-Glc and TDP-Glc as glucosyl donors. This Mycobacterium ulcerans (strain Agy99) protein is Trehalose-6-phosphate synthase.